A 154-amino-acid polypeptide reads, in one-letter code: Fluoride-specific ion channel FluC 1 (154 aa).

4 helical membrane-spanning segments follow: residues 28–48 (VVAV…AASL), 59–79 (WTTF…MVVI), 91–111 (PFFG…AVDS), and 124–144 (LAYL…AAWA). Na(+) is bound by residues Gly99 and Thr102.

The protein belongs to the fluoride channel Fluc/FEX (TC 1.A.43) family.

Its subcellular location is the cell membrane. The enzyme catalyses fluoride(in) = fluoride(out). Na(+) is not transported, but it plays an essential structural role and its presence is essential for fluoride channel function. In terms of biological role, fluoride-specific ion channel. Important for reducing fluoride concentration in the cell, thus reducing its toxicity. The polypeptide is Fluoride-specific ion channel FluC 1 (Streptomyces coelicolor (strain ATCC BAA-471 / A3(2) / M145)).